Reading from the N-terminus, the 318-residue chain is Beta-galactosidase small subunit (318 aa).

Belongs to the bacterial beta-galactosidase small subunit family. Heterodimer of a large (LacL) and a small subunit (LacM).

The catalysed reaction is Hydrolysis of terminal non-reducing beta-D-galactose residues in beta-D-galactosides.. In terms of biological role, component of a beta-galactosidase. The sequence is that of Beta-galactosidase small subunit from Latilactobacillus sakei (Lactobacillus sakei).